Consider the following 400-residue polypeptide: Elongation factor Tu (400 aa).

The tr-type G domain occupies 10–210 (KPHCNVGTIG…VDSYIPIPPR (201 aa)). The tract at residues 19–26 (GHVDHGKT) is G1. 19 to 26 (GHVDHGKT) serves as a coordination point for GTP. Threonine 26 is a binding site for Mg(2+). Residues 60-64 (GLTIA) are G2. The tract at residues 81-84 (DCPG) is G3. Residues 81 to 85 (DCPGH) and 136 to 139 (NKCD) contribute to the GTP site. The G4 stretch occupies residues 136–139 (NKCD). The interval 174–176 (SAI) is G5.

It belongs to the TRAFAC class translation factor GTPase superfamily. Classic translation factor GTPase family. EF-Tu/EF-1A subfamily. Monomer.

Its subcellular location is the cytoplasm. The enzyme catalyses GTP + H2O = GDP + phosphate + H(+). In terms of biological role, GTP hydrolase that promotes the GTP-dependent binding of aminoacyl-tRNA to the A-site of ribosomes during protein biosynthesis. The sequence is that of Elongation factor Tu from Dehalococcoides mccartyi (strain ATCC BAA-2266 / KCTC 15142 / 195) (Dehalococcoides ethenogenes (strain 195)).